We begin with the raw amino-acid sequence, 211 residues long: MPKIKWTNKDFNVFKIDGLEQRMNALNDHVRPKFHQLGDDFATYFSSKLGEEFFPHVAKHARRTVNPPQDSWVAFAPYKRGYKSLPHFQIGLWHSHLFIVLAIIYEAPQKNVMAERLLAHPSLFEQLSDDFIVSGDHMSPEAISLEEAKEDKLKELLLRLRDVKKGEFLIGRHIPKDQATKLTASEFHQLTEQTFNSLLPFYNVIVGKDLK.

The protein belongs to the UPF0637 family.

The chain is UPF0637 protein Bsph_1379 from Lysinibacillus sphaericus (strain C3-41).